A 998-amino-acid polypeptide reads, in one-letter code: Antigenic heat-stable 120 kDa protein (998 aa).

Residues 1-69 are disordered; sequence GGFMSQDHTG…LSGTISTDDQ (69 aa). The segment covering 12–21 has biased composition (acidic residues); that stretch reads ENDEGYESDI. The segment covering 46–68 has biased composition (polar residues); it reads TPASSTQSTPAISTLSGTISTDD.

The protein resides in the cytoplasm. This Rickettsia akari protein is Antigenic heat-stable 120 kDa protein (sca4).